A 318-amino-acid polypeptide reads, in one-letter code: NADH-ubiquinone oxidoreductase chain 1 (318 aa).

8 helical membrane-spanning segments follow: residues 2–22 (FMLNLLTMIVPVLLAVAFLTL), 68–88 (ITMFIMAPILALTLALTMWIP), 100–120 (LGVLFMLAMSSLAVYALLWSG), 147–167 (AIILLSTLLMSGSYSLSTLII), 171–191 (YIWLILPSWPLTMMWFISTLA), 217–237 (GGPFALFFLAEYANIIMMNAL), 254–273 (LYTTNFAMKTLLLTMSFLWI), and 294–314 (LPLTLALCMWYVTMPIMMAGI).

This sequence belongs to the complex I subunit 1 family.

The protein localises to the mitochondrion inner membrane. It catalyses the reaction a ubiquinone + NADH + 5 H(+)(in) = a ubiquinol + NAD(+) + 4 H(+)(out). Functionally, core subunit of the mitochondrial membrane respiratory chain NADH dehydrogenase (Complex I) that is believed to belong to the minimal assembly required for catalysis. Complex I functions in the transfer of electrons from NADH to the respiratory chain. The immediate electron acceptor for the enzyme is believed to be ubiquinone. In Hsunycteris thomasi (Thomas's nectar bat), this protein is NADH-ubiquinone oxidoreductase chain 1 (MT-ND1).